A 503-amino-acid chain; its full sequence is DnaJ homolog subfamily C member 3 (503 aa).

A signal peptide spans 1-31 (MVSAAASAGRLGSALPFLLVLLDLQYQGAEC). TPR repeat units follow at residues 37–70 (VEKQ…DSDN), 71–104 (YIAY…KQDF), 105–137 (TSRL…NPSN), 153–186 (LQRL…CVWD), 187–220 (AELR…KSDN), 221–254 (TEAF…DQDH), 267–300 (LNKQ…EPDV), 305–338 (TRAK…EPTN), and 339–372 (VNAL…SEND). Residues Cys-247 and Cys-257 are joined by a disulfide bond. Cys-312 and Cys-328 are oxidised to a cystine. The segment at 374-392 (QIREGLERAQRMLKQSQKR) is flexible linker. Residues 393–461 (DYYKILGVKR…EMRRKFDAGE (69 aa)) enclose the J domain.

The protein localises to the endoplasmic reticulum. In terms of biological role, may be involved in the unfolded protein response (UPR) during ER stress. The sequence is that of DnaJ homolog subfamily C member 3 (DNAJC3) from Gallus gallus (Chicken).